We begin with the raw amino-acid sequence, 555 residues long: Meiotic mRNA stability protein kinase SSN3 (555 aa).

The Protein kinase domain occupies 75–463 (YEVIGYIAAG…AFNALEHKYF (389 aa)). Position 81–89 (81–89 (IAAGTYGKV)) interacts with ATP. The span at 100 to 138 (TNSANGSSLNGTNAKIPQFDSTQPKSSSSMDMQANTNAL) shows a compositional bias: polar residues. Positions 100 to 166 (TNSANGSSLN…REDVSPHYNS (67 aa)) are disordered. An ATP-binding site is contributed by K183. D286 (proton acceptor) is an active-site residue.

The protein belongs to the protein kinase superfamily. CMGC Ser/Thr protein kinase family. CDC2/CDKX subfamily. In terms of assembly, component of the SRB8-11 complex which consists of SRB8, SSN2/SRB9, SSN3/SRB10 and SSN8/SRB11. The SRB8-11 complex associates with the Mediator complex. The SSN3/SRB10 and SSN8/SRB11 kinase-cyclin pair also associate with the RNA polymerase II holoenzyme. Interacts with TUP1.

It is found in the nucleus. It catalyses the reaction L-seryl-[protein] + ATP = O-phospho-L-seryl-[protein] + ADP + H(+). The catalysed reaction is L-threonyl-[protein] + ATP = O-phospho-L-threonyl-[protein] + ADP + H(+). The enzyme catalyses [DNA-directed RNA polymerase] + ATP = phospho-[DNA-directed RNA polymerase] + ADP + H(+). In terms of biological role, component of the SRB8-11 complex. The SRB8-11 complex is a regulatory module of the Mediator complex which is itself involved in regulation of basal and activated RNA polymerase II-dependent transcription. The SRB8-11 complex may be involved in the transcriptional repression of a subset of genes regulated by Mediator. It may inhibit the association of the Mediator complex with RNA polymerase II to form the holoenzyme complex. The SRB8-11 complex phosphorylates the C-terminal domain (CTD) of the largest subunit of RNA polymerase II RPB1 at serines 2 and 5. The SSN3/SRB10 and SSN8/SRB11 kinase-cyclin pair may also positively and negatively regulate numerous transcriptional activators in response to changes in nutritional and physiological conditions. Phosphorylates GCN4, promoting its ubiquitin-mediated degradation, and MSN2, promoting its nuclear exclusion. Phosphorylates STE12, thereby promoting its degradation and inhibition of filamentous growth. Phosphorylates GAL4, and this phosphorylation is required for efficient galactose-inducible transcription. Also phosphorylates BDF1 and the TAF2 subunit of the TFIID complex. The protein is Meiotic mRNA stability protein kinase SSN3 (SSN3) of Saccharomyces cerevisiae (strain ATCC 204508 / S288c) (Baker's yeast).